A 428-amino-acid chain; its full sequence is Cytochrome c biogenesis protein CcsB (428 aa).

A run of 3 helical transmembrane segments spans residues leucine 14–isoleucine 34, serine 72–arginine 92, and isoleucine 162–serine 182.

The protein belongs to the Ccs1/CcsB family. May interact with CcsA.

It is found in the cellular thylakoid membrane. Required during biogenesis of c-type cytochromes (cytochrome c6 and cytochrome f) at the step of heme attachment. The polypeptide is Cytochrome c biogenesis protein CcsB (Prochlorococcus marinus (strain MIT 9312)).